Reading from the N-terminus, the 72-residue chain is Large ribosomal subunit protein bL31 (72 aa).

It belongs to the bacterial ribosomal protein bL31 family. Type A subfamily. In terms of assembly, part of the 50S ribosomal subunit.

In terms of biological role, binds the 23S rRNA. This Maricaulis maris (strain MCS10) (Caulobacter maris) protein is Large ribosomal subunit protein bL31.